Reading from the N-terminus, the 485-residue chain is Fumarate hydratase, mitochondrial (485 aa).

The transit peptide at 1–19 (MLSASRKLNNQQFLKTIRN) directs the protein to the mitochondrion. Substrate contacts are provided by residues 118–120 (SGT), 150–153 (HPND), 160–162 (SSN), and threonine 208. The active-site Proton donor/acceptor is histidine 209. Residue serine 339 is part of the active site. Residues serine 340 and 345–347 (KVN) each bind substrate.

This sequence belongs to the class-II fumarase/aspartase family. Fumarase subfamily. In terms of assembly, homotetramer.

Its subcellular location is the mitochondrion. It is found in the cytoplasm. The enzyme catalyses (S)-malate = fumarate + H2O. Its pathway is carbohydrate metabolism; tricarboxylic acid cycle; (S)-malate from fumarate: step 1/1. Functionally, catalyzes the reversible stereospecific interconversion of fumarate to L-malate. Catalyzes the hydration of fumarate to L-malate in the tricarboxylic acid (TCA) cycle to facilitate a transition step in the production of energy in the form of NADH. This is Fumarate hydratase, mitochondrial from Dictyostelium discoideum (Social amoeba).